A 207-amino-acid chain; its full sequence is Large ribosomal subunit protein uL4 (207 aa).

Residues 47–77 (GTADTKTRAEVSGGGRKPWRQKGTGRARHGS) form a disordered region. Residues 63 to 77 (KPWRQKGTGRARHGS) show a composition bias toward basic residues.

Belongs to the universal ribosomal protein uL4 family. In terms of assembly, part of the 50S ribosomal subunit.

Functionally, one of the primary rRNA binding proteins, this protein initially binds near the 5'-end of the 23S rRNA. It is important during the early stages of 50S assembly. It makes multiple contacts with different domains of the 23S rRNA in the assembled 50S subunit and ribosome. In terms of biological role, forms part of the polypeptide exit tunnel. This is Large ribosomal subunit protein uL4 from Symbiobacterium thermophilum (strain DSM 24528 / JCM 14929 / IAM 14863 / T).